Consider the following 800-residue polypeptide: Probable replication endonuclease from prophage-like region (800 aa).

Catalysis depends on O-(5'-phospho-DNA)-tyrosine intermediate residues Tyr503 and Tyr507.

The protein belongs to the phage GPA family.

Possible endonuclease which induces a single-strand cut and initiates DNA replication. This is Probable replication endonuclease from prophage-like region from Salmonella paratyphi A (strain ATCC 9150 / SARB42).